The chain runs to 335 residues: Anthranilate phosphoribosyltransferase 2 (335 aa).

5-phospho-alpha-D-ribose 1-diphosphate-binding positions include glycine 70, 73–74 (GD), threonine 78, 80–83 (NIST), 98–106 (KHGNRSASS), and serine 110. An anthranilate-binding site is contributed by glycine 70. Serine 82 contacts Mg(2+). Asparagine 101 provides a ligand contact to anthranilate. An anthranilate-binding site is contributed by arginine 156. Residues aspartate 215 and glutamate 216 each contribute to the Mg(2+) site.

The protein belongs to the anthranilate phosphoribosyltransferase family. Homodimer. Requires Mg(2+) as cofactor.

It carries out the reaction N-(5-phospho-beta-D-ribosyl)anthranilate + diphosphate = 5-phospho-alpha-D-ribose 1-diphosphate + anthranilate. It participates in amino-acid biosynthesis; L-tryptophan biosynthesis; L-tryptophan from chorismate: step 2/5. Functionally, catalyzes the transfer of the phosphoribosyl group of 5-phosphorylribose-1-pyrophosphate (PRPP) to anthranilate to yield N-(5'-phosphoribosyl)-anthranilate (PRA). The sequence is that of Anthranilate phosphoribosyltransferase 2 from Streptomyces coelicolor (strain ATCC BAA-471 / A3(2) / M145).